A 269-amino-acid chain; its full sequence is Arginine and glutamate-rich protein 1-B (269 aa).

Over residues 1–57 (MGRSRSRSSSRSKHSKTSKHSKKRSRSRSRSRDRERKRRSKSRESKRNRRRESRSRS) the composition is skewed to basic residues. The segment at 1–70 (MGRSRSRSSS…TATSRRDRER (70 aa)) is necessary and sufficient for RNA binding. Disordered stretches follow at residues 1–109 (MGRS…MERQ) and 233–269 (RMKL…KASE). Basic and acidic residues-rich tracts occupy residues 64 to 80 (SRRD…RIDI), 89 to 109 (SAVD…MERQ), and 233 to 249 (RMKL…EEQK). The interval 71-269 (AASPPERIDI…KLSFSLKASE (199 aa)) is necessary and sufficient for transcriptional regulation.

Belongs to the ARGLU1 family.

It localises to the nucleus. It is found in the nucleus speckle. Its subcellular location is the chromosome. Its function is as follows. Dual function regulator of gene expression; regulator of transcription and modulator of alternative splicing. General coactivator of nuclear receptor-induced gene expression. The sequence is that of Arginine and glutamate-rich protein 1-B (arglu1b) from Danio rerio (Zebrafish).